Reading from the N-terminus, the 178-residue chain is Imidazoleglycerol-phosphate dehydratase (178 aa).

Belongs to the imidazoleglycerol-phosphate dehydratase family.

The protein localises to the cytoplasm. The enzyme catalyses D-erythro-1-(imidazol-4-yl)glycerol 3-phosphate = 3-(imidazol-4-yl)-2-oxopropyl phosphate + H2O. It participates in amino-acid biosynthesis; L-histidine biosynthesis; L-histidine from 5-phospho-alpha-D-ribose 1-diphosphate: step 6/9. This is Imidazoleglycerol-phosphate dehydratase from Archaeoglobus fulgidus (strain ATCC 49558 / DSM 4304 / JCM 9628 / NBRC 100126 / VC-16).